Here is a 330-residue protein sequence, read N- to C-terminus: Aspartate--ammonia ligase (330 aa).

It belongs to the class-II aminoacyl-tRNA synthetase family. AsnA subfamily.

It is found in the cytoplasm. The enzyme catalyses L-aspartate + NH4(+) + ATP = L-asparagine + AMP + diphosphate + H(+). It participates in amino-acid biosynthesis; L-asparagine biosynthesis; L-asparagine from L-aspartate (ammonia route): step 1/1. The protein is Aspartate--ammonia ligase of Klebsiella pneumoniae subsp. pneumoniae (strain ATCC 700721 / MGH 78578).